Reading from the N-terminus, the 260-residue chain is BTB/POZ domain-containing protein KCTD21 (260 aa).

Positions 3 to 72 constitute a BTB domain; that stretch reads DPITLNVGGK…LRTSHLDLPE (70 aa). Residues 88–112 adopt a coiled-coil conformation; sequence QVQPLIEALQEKEVELSKAEKNAML.

As to quaternary structure, homopentamer. Interacts with KCTD11; KCTD21 and KCTD11 may associate in pentameric assemblies. Interacts (via BTB domain) with CUL3; indicative for a participation in a BCR (BTB-CUL3-RBX1) E3 ubiquitin-protein ligase complex. As to expression, highly expressed in cerebellum and brain. Expression is down-regulated in medulloblastoma.

Its pathway is protein modification; protein ubiquitination. Probable substrate-specific adapter of a BCR (BTB-CUL3-RBX1) E3 ubiquitin-protein ligase complex mediating the ubiquitination and subsequent proteasomal degradation of target proteins. Promotes the ubiquitination of HDAC1. Can function as antagonist of the Hedgehog pathway by affecting the nuclear transfer of transcription factor GLI1; the function probably occurs via HDAC1 down-regulation, keeping GLI1 acetylated and inactive. Inhibits cell growth and tumorigenicity of medulloblastoma (MDB). The sequence is that of BTB/POZ domain-containing protein KCTD21 (KCTD21) from Homo sapiens (Human).